The primary structure comprises 477 residues: Inner membrane transporter YgjI (477 aa).

Residues 1–8 lie on the Periplasmic side of the membrane; it reads MSDTKRNT. Residues 9–29 form a helical membrane-spanning segment; it reads IGKFGLLSLTFAAVYSFNNVI. The Cytoplasmic portion of the chain corresponds to 30–41; it reads NNNIELGLASAP. Residues 42–62 form a helical membrane-spanning segment; that stretch reads MFFLATIFYFIPFCLIIAEFV. The Periplasmic segment spans residues 63–83; that stretch reads SLNKNSEAGVYAWVKSSLGGR. A helical membrane pass occupies residues 84–104; it reads WAFITAYTYWFVNLFFFTSLL. Over 105-120 the chain is Cytoplasmic; the sequence is PRVIAYASYAFLGYEY. A helical transmembrane segment spans residues 121 to 141; the sequence is IMTPVATTIISMVLFAFSTWV. At 142-158 the chain is on the periplasmic side; the sequence is STNGAKMLGPITSVTST. The chain crosses the membrane as a helical span at residues 159–179; sequence LMLLLTLSYILLAGTALVGGV. The Cytoplasmic segment spans residues 180–196; the sequence is QPADAITVDAMIPNFNW. A helical membrane pass occupies residues 197 to 217; that stretch reads AFLGVTTWIFMAAGGAESVAV. Residues 218 to 232 lie on the Periplasmic side of the membrane; the sequence is YVNDVKGGSKSFVKV. A helical membrane pass occupies residues 233-253; sequence IILAGIFIGVLYSVSSVLINV. Topologically, residues 254–263 are cytoplasmic; that stretch reads FVSSKELKFT. A helical membrane pass occupies residues 264-284; it reads GGSVQVFHGMAAYFGLPEALM. Over 285-286 the chain is Periplasmic; sequence NR. Residues 287 to 307 traverse the membrane as a helical segment; that stretch reads FVGLVSFTAMFGSLLMWTATP. Over 308–335 the chain is Cytoplasmic; sequence VKIFFSEIPEGIFGKKTVELNENGVPAR. The chain crosses the membrane as a helical span at residues 336-356; it reads AAWIQFLIVIPLMIIPMLGSN. Residues 357-364 lie on the Periplasmic side of the membrane; the sequence is TVQDLMNT. The helical transmembrane segment at 365–385 threads the bilayer; that stretch reads IINMTAAASMLPPLFIMLAYL. Residues 386-405 are Cytoplasmic-facing; sequence NLRAKLDHLPRDFRMGSRRT. The helical transmembrane segment at 406–426 threads the bilayer; it reads GIIVVSMLIAIFAVGFVASTF. Residues 427-431 lie on the Periplasmic side of the membrane; it reads PTGAN. The helical transmembrane segment at 432 to 452 threads the bilayer; sequence ILTIIFYNVGGIVIFLGFAWW. Topologically, residues 453–477 are cytoplasmic; it reads KYSKYIKGLTAEERHIEATPASNVD.

This sequence belongs to the amino acid-polyamine-organocation (APC) superfamily.

The protein localises to the cell inner membrane. The protein is Inner membrane transporter YgjI (ygjI) of Escherichia coli (strain K12).